The chain runs to 200 residues: Small ribosomal subunit protein uS2 (200 aa).

The protein belongs to the universal ribosomal protein uS2 family.

In Picrophilus torridus (strain ATCC 700027 / DSM 9790 / JCM 10055 / NBRC 100828 / KAW 2/3), this protein is Small ribosomal subunit protein uS2.